The chain runs to 439 residues: Large ribosomal subunit protein mL65 (439 aa).

It belongs to the mitochondrion-specific ribosomal protein mL65 family. As to quaternary structure, component of the mitochondrial large ribosomal subunit (mt-LSU). Mature mammalian 55S mitochondrial ribosomes consist of a small (28S) and a large (39S) subunit. The 28S small subunit contains a 12S ribosomal RNA (12S mt-rRNA) and 30 different proteins. The 39S large subunit contains a 16S rRNA (16S mt-rRNA), a copy of mitochondrial valine transfer RNA (mt-tRNA(Val)), which plays an integral structural role, and 52 different proteins. mL65 forms a heterodimer with mL37. As to expression, heart, skeletal muscle, kidney and liver. Lower expression in placenta and peripheral blood leukocytes.

It is found in the mitochondrion. This Homo sapiens (Human) protein is Large ribosomal subunit protein mL65 (MRPS30).